Reading from the N-terminus, the 377-residue chain is UPF0754 membrane protein GTNG_0550 (377 aa).

2 consecutive transmembrane segments (helical) span residues 7-27 (LLFMMAVGALIGGMTNFIAIV) and 357-377 (YLGALLGAMIGAVQGIIGLWL).

It belongs to the UPF0754 family.

The protein localises to the cell membrane. This chain is UPF0754 membrane protein GTNG_0550, found in Geobacillus thermodenitrificans (strain NG80-2).